We begin with the raw amino-acid sequence, 354 residues long: Histidinol-phosphate aminotransferase (354 aa).

Lys-222 is modified (N6-(pyridoxal phosphate)lysine).

This sequence belongs to the class-II pyridoxal-phosphate-dependent aminotransferase family. Histidinol-phosphate aminotransferase subfamily. In terms of assembly, homodimer. Requires pyridoxal 5'-phosphate as cofactor.

It catalyses the reaction L-histidinol phosphate + 2-oxoglutarate = 3-(imidazol-4-yl)-2-oxopropyl phosphate + L-glutamate. Its pathway is amino-acid biosynthesis; L-histidine biosynthesis; L-histidine from 5-phospho-alpha-D-ribose 1-diphosphate: step 7/9. The sequence is that of Histidinol-phosphate aminotransferase from Staphylococcus carnosus (strain TM300).